The sequence spans 198 residues: Peroxiredoxin-2 (198 aa).

Alanine 2 carries the post-translational modification N-acetylalanine. A Thioredoxin domain is found at 6–164; the sequence is AHIGKPAPDF…ALRLVQAFQY (159 aa). Cysteine 51 serves as the catalytic Cysteine sulfenic acid (-SOH) intermediate. Serine 112 carries the phosphoserine modification. The residue at position 182 (threonine 182) is a Phosphothreonine. Position 196 is an N6-acetyllysine (lysine 196).

The protein belongs to the peroxiredoxin family. AhpC/Prx1 subfamily. As to quaternary structure, homodimer; disulfide-linked, upon oxidation. 5 homodimers assemble to form a ring-like decamer. Interacts with TIPIN. The enzyme can be inactivated by further oxidation of the cysteine sulfenic acid (C(P)-SOH) to sulphinic acid (C(P)-SO2H) instead of its condensation to a disulfide bond. It can be reactivated by forming a transient disulfide bond with sulfiredoxin SRXN1, which reduces the cysteine sulfinic acid in an ATP- and Mg-dependent manner. In terms of processing, acetylation increases resistance to transition to high molecular-mass complexes. Deacetylated by HDAC6 which decreases reducing activity.

The protein localises to the cytoplasm. It catalyses the reaction a hydroperoxide + [thioredoxin]-dithiol = an alcohol + [thioredoxin]-disulfide + H2O. In terms of biological role, thiol-specific peroxidase that catalyzes the reduction of hydrogen peroxide and organic hydroperoxides to water and alcohols, respectively. Plays a role in cell protection against oxidative stress by detoxifying peroxides and as sensor of hydrogen peroxide-mediated signaling events. Might participate in the signaling cascades of growth factors and tumor necrosis factor-alpha by regulating the intracellular concentrations of H(2)O(2). In Cricetulus griseus (Chinese hamster), this protein is Peroxiredoxin-2 (PRDX2).